Reading from the N-terminus, the 222-residue chain is MAEPGRPAREAPAASSRKTHRAPRRPRPSRSASGASEPPLRSSVQPACDSAAGTHPVGNTVAMKQKKKKTPNRVSGTNGSEKPSEKPAPDEAPPSAEAQAEQLARELAWCVEQLELGLKTQRPTPKQKEQAVGAIRTLRSEKTPLPRKRQLMRSLFGDYRAQMDAEWREALRALKAATHSAQVQLVSEATRKKSGRVCRPRPAERAKTTPDLTSEEFRFNFF.

Residues 1 to 16 (MAEPGRPAREAPAASS) show a composition bias toward low complexity. Disordered regions lie at residues 1 to 103 (MAEP…AEQL), 119 to 146 (KTQR…TPLP), and 186 to 210 (VSEA…KTTP). Residue Ala2 is modified to N-acetylalanine. The segment covering 17 to 28 (RKTHRAPRRPRP) has biased composition (basic residues). An Omega-N-methylarginine modification is found at Arg27. Residues 29 to 39 (SRSASGASEPP) show a composition bias toward low complexity. Ser75 is modified (phosphoserine). Residues 93–103 (PPSAEAQAEQL) are compositionally biased toward low complexity.

It belongs to the UPF0488 family.

In Mus musculus (Mouse), this protein is UPF0488 protein C8orf33 homolog.